Here is a 56-residue protein sequence, read N- to C-terminus: Large ribosomal subunit protein bL32A (56 aa).

The segment at 1-56 (MAVPARRTSKAKKNKRRTHKGLTAPGLSRDSETGEYRMSHRISPDGTYKGRTIIEK) is disordered. A compositionally biased stretch (basic residues) spans 7 to 20 (RTSKAKKNKRRTHK). The segment covering 29–38 (RDSETGEYRM) has biased composition (basic and acidic residues).

Belongs to the bacterial ribosomal protein bL32 family.

The sequence is that of Large ribosomal subunit protein bL32A (rpmF1) from Listeria innocua serovar 6a (strain ATCC BAA-680 / CLIP 11262).